A 408-amino-acid chain; its full sequence is Phosphatidylinositol transfer protein CSR1 (408 aa).

Serine 2 bears the N-acetylserine mark. The residue at position 2 (serine 2) is a Phosphoserine. Residues 157–317 enclose the CRAL-TRIO domain; it reads ETGVIKNLEL…YLGGENDNDL (161 aa).

The protein belongs to the PITP family. As to quaternary structure, forms a complex with 2 TSA2 subunits. Binds phosphatidylinositol (PtdIns).

It is found in the cytoplasm. The protein resides in the microsome. It localises to the endosome. The catalysed reaction is a 1,2-diacyl-sn-glycero-3-phospho-(1D-myo-inositol)(in) = a 1,2-diacyl-sn-glycero-3-phospho-(1D-myo-inositol)(out). Non-classical phosphatidylinositol (PtdIns) transfer protein (PITP), which exhibits PtdIns-binding/transfer activity in the absence of detectable PtdCho-binding/transfer activity. Activates SPO14/PLD1 (phospholipase D1) by stimulating phosphoinositide synthesis via the STT4 PtdIns 4-kinase. Modulates ArfGAP function through effects on SPO14 activity. Inhibits phosphatidylcholine degradation by PLB1 (phospholipase B1). May also regulate post-Golgi membrane-trafficking events and have a role resistance to oxidative stress. Inhibits fatty acid synthase activity in response to heme depletion and oleic acid starvation, preventing saturated fatty acid (SFA) accumulation. In Saccharomyces cerevisiae (strain ATCC 204508 / S288c) (Baker's yeast), this protein is Phosphatidylinositol transfer protein CSR1 (CSR1).